A 358-amino-acid chain; its full sequence is GTPase Obg (358 aa).

The 159-residue stretch at 1-159 (MKFLDEAKVY…RWIWLRLKLI (159 aa)) folds into the Obg domain. One can recognise an OBG-type G domain in the interval 160-327 (ADAGLVGLPN…VLRALVEVIG (168 aa)). GTP contacts are provided by residues 166–173 (GLPNAGKS), 191–195 (FTTLH), 212–215 (DIPG), 279–282 (NKID), and 308–310 (SGV). Mg(2+) is bound by residues serine 173 and threonine 193. The segment at 335–358 (AKGADASAAQAMETPVARAKPWSP) is disordered.

This sequence belongs to the TRAFAC class OBG-HflX-like GTPase superfamily. OBG GTPase family. In terms of assembly, monomer. It depends on Mg(2+) as a cofactor.

Its subcellular location is the cytoplasm. An essential GTPase which binds GTP, GDP and possibly (p)ppGpp with moderate affinity, with high nucleotide exchange rates and a fairly low GTP hydrolysis rate. Plays a role in control of the cell cycle, stress response, ribosome biogenesis and in those bacteria that undergo differentiation, in morphogenesis control. This Nitrobacter winogradskyi (strain ATCC 25391 / DSM 10237 / CIP 104748 / NCIMB 11846 / Nb-255) protein is GTPase Obg.